The chain runs to 61 residues: Putative neurotoxin-A (61 aa).

Residues 1–19 (MKTVCGVFMVLLALTVLLA) form the signal peptide. Cystine bridges form between cysteine 31–cysteine 50, cysteine 36–cysteine 55, and cysteine 40–cysteine 57.

This sequence belongs to the short scorpion toxin superfamily. As to expression, expressed by the venom gland.

The protein localises to the secreted. This is Putative neurotoxin-A from Lychas mucronatus (Chinese swimming scorpion).